Reading from the N-terminus, the 362-residue chain is 3-ketodihydrosphingosine reductase gsl-3 (362 aa).

Residue Leu-55 coordinates NADP(+). NADPH is bound by residues Gly-58, Ser-60, Gly-62, and Arg-83. The GXSXG motif lies at 58–62; sequence GASEG. Asn-84 provides a ligand contact to NADP(+). 2 residues coordinate NADPH: Arg-87 and Asp-113. NADP(+) is bound by residues Asp-113, Arg-176, Tyr-216, Lys-220, Ile-252, and Ser-254. Tyr-216 acts as the Proton acceptor in catalysis. Lys-220 acts as the Lowers pKa of active site Tyr in catalysis. The helical transmembrane segment at 318–338 threads the bilayer; sequence NNWVLDTLMGWLIPIIYFFVL.

This sequence belongs to the short-chain dehydrogenases/reductases (SDR) family.

It is found in the endoplasmic reticulum membrane. The enzyme catalyses sphinganine + NADP(+) = 3-oxosphinganine + NADPH + H(+). Its pathway is lipid metabolism; sphingolipid metabolism. In terms of biological role, catalyzes the reduction of 3'-oxosphinganine (3-ketodihydrosphingosine/KDS) to sphinganine (dihydrosphingosine/DHS), the second step of de novo sphingolipid biosynthesis. The protein is 3-ketodihydrosphingosine reductase gsl-3 (gsl-3) of Neurospora crassa (strain ATCC 24698 / 74-OR23-1A / CBS 708.71 / DSM 1257 / FGSC 987).